Reading from the N-terminus, the 44-residue chain is Photosystem II reaction center protein K (44 aa).

The propeptide occupies 1–7; the sequence is MTTLLLA. Residues 19–39 form a helical membrane-spanning segment; sequence IVDVLPVIPLLFLLLAFVWQA.

Belongs to the PsbK family. PSII is composed of 1 copy each of membrane proteins PsbA, PsbB, PsbC, PsbD, PsbE, PsbF, PsbH, PsbI, PsbJ, PsbK, PsbL, PsbM, PsbT, PsbX, PsbY, PsbZ, Psb30/Ycf12, at least 3 peripheral proteins of the oxygen-evolving complex and a large number of cofactors. It forms dimeric complexes.

The protein resides in the plastid. Its subcellular location is the chloroplast thylakoid membrane. Its function is as follows. One of the components of the core complex of photosystem II (PSII). PSII is a light-driven water:plastoquinone oxidoreductase that uses light energy to abstract electrons from H(2)O, generating O(2) and a proton gradient subsequently used for ATP formation. It consists of a core antenna complex that captures photons, and an electron transfer chain that converts photonic excitation into a charge separation. The protein is Photosystem II reaction center protein K of Tupiella akineta (Green alga).